We begin with the raw amino-acid sequence, 289 residues long: Glucanase inhibitor protein 2 (289 aa).

A signal peptide spans 1–19 (MKVTATIAAASMAIAAASA). In terms of domain architecture, Peptidase S1 spans 29–257 (ILGGSIIPSG…ALKWVNPIIK (229 aa)). Residues Cys56 and Cys72 are joined by a disulfide bond. Residues Asn89, Asn104, and Asn109 are each glycosylated (N-linked (GlcNAc...) asparagine). Cystine bridges form between Cys180–Cys192 and Cys202–Cys233.

The protein belongs to the peptidase S1 family.

Its subcellular location is the secreted. Secreted effector that suppresses host plant glucan elicitor-mediated defense responses. Targets host endoglucanases and inhibits the endoglucanase-mediated release of elicitor-active glucan oligosaccharides from P.sojae cell walls. The polypeptide is Glucanase inhibitor protein 2 (Phytophthora sojae (Soybean stem and root rot agent)).